Consider the following 530-residue polypeptide: MEEDSLYLGGEWQFNHFSKLTSSRLDAAFAEIQRTSLPEKSPLSCETRVDLCDDLVPEARQLAPREKLPLSSRRPAAVGAGLQNMGNTCYVNASLQCLTYTPPLANYMLSREHSQTCHRHKGCMLCTMQAHITRALHNPGHVIQPSQALAAGFHRGKQEDAHEFLMFTVDAMKKACLPGHKQVDHPSKDTTLIHQIFGGYWRSQIKCLHCHGISDTFDPYLDIALDIQAAQSVQQALEQLVKPEELNGENAYHCGVCLQRAPASKTLTLHTSAKVLILVLKRFSDVTGNKIAKNVQYPECLDMQPYMSQQNTGPLVYVLYAVLVHAGWSCHNGHYFSYVKAQEGQWYKMDDAEVTAASITSVLSQQAYVLFYIQKSEWERHSESVSRGREPRALGAEDTDRRATQGELKRDHPCLQAPELDEHLVERATQESTLDRWKFLQEQNKTKPEFNVRKVEGTLPPDVLVIHQSKYKCGMKNHHPEQQSSLLNLSSSTPTHQESMNTGTLASLRGRARRSKGKNKHSKRALLVCQ.

Residues 80 to 375 (AGLQNMGNTC…QAYVLFYIQK (296 aa)) enclose the USP domain. Cys89 (nucleophile) is an active-site residue. The active-site Proton acceptor is the His334. 2 stretches are compositionally biased toward basic and acidic residues: residues 382–392 (SESVSRGREPR) and 398–412 (DTDR…KRDH). Disordered stretches follow at residues 382-412 (SESV…KRDH) and 477-530 (NHHP…LVCQ). The span at 493–505 (TPTHQESMNTGTL) shows a compositional bias: polar residues. Positions 510–524 (GRARRSKGKNKHSKR) are enriched in basic residues.

It belongs to the peptidase C19 family. USP17 subfamily.

It localises to the nucleus. The protein resides in the endoplasmic reticulum. The catalysed reaction is Thiol-dependent hydrolysis of ester, thioester, amide, peptide and isopeptide bonds formed by the C-terminal Gly of ubiquitin (a 76-residue protein attached to proteins as an intracellular targeting signal).. In terms of biological role, deubiquitinating enzyme that removes conjugated ubiquitin from specific proteins to regulate different cellular processes that may include cell proliferation, progression through the cell cycle, apoptosis, cell migration, and the cellular response to viral infection. The protein is Ubiquitin carboxyl-terminal hydrolase 17-like protein 13 (USP17L13) of Homo sapiens (Human).